We begin with the raw amino-acid sequence, 532 residues long: Probable cytochrome P450 524A1 (532 aa).

A helical membrane pass occupies residues 8 to 28; sequence FIIFILLAALAVFVSEATSKV. Position 478 (C478) interacts with heme.

This sequence belongs to the cytochrome P450 family. The cofactor is heme.

The protein localises to the membrane. This is Probable cytochrome P450 524A1 (cyp524A1) from Dictyostelium discoideum (Social amoeba).